A 97-amino-acid polypeptide reads, in one-letter code: YcgL domain-containing protein Pfl01_1389 (97 aa).

Residues 3–87 form the YcgL domain; that stretch reads RICSIYQSSK…AEEEYIEHLP (85 aa).

The chain is YcgL domain-containing protein Pfl01_1389 from Pseudomonas fluorescens (strain Pf0-1).